Reading from the N-terminus, the 283-residue chain is Bifunctional protein FolD (283 aa).

Residues glycine 165 to glycine 167, threonine 192, and valine 233 each bind NADP(+).

It belongs to the tetrahydrofolate dehydrogenase/cyclohydrolase family. Homodimer.

The catalysed reaction is (6R)-5,10-methylene-5,6,7,8-tetrahydrofolate + NADP(+) = (6R)-5,10-methenyltetrahydrofolate + NADPH. It catalyses the reaction (6R)-5,10-methenyltetrahydrofolate + H2O = (6R)-10-formyltetrahydrofolate + H(+). It functions in the pathway one-carbon metabolism; tetrahydrofolate interconversion. Its function is as follows. Catalyzes the oxidation of 5,10-methylenetetrahydrofolate to 5,10-methenyltetrahydrofolate and then the hydrolysis of 5,10-methenyltetrahydrofolate to 10-formyltetrahydrofolate. The sequence is that of Bifunctional protein FolD from Mycolicibacterium smegmatis (strain ATCC 700084 / mc(2)155) (Mycobacterium smegmatis).